We begin with the raw amino-acid sequence, 486 residues long: 2-succinylbenzoate--CoA ligase (486 aa).

This sequence belongs to the ATP-dependent AMP-binding enzyme family. MenE subfamily.

It catalyses the reaction 2-succinylbenzoate + ATP + CoA = 2-succinylbenzoyl-CoA + AMP + diphosphate. The protein operates within quinol/quinone metabolism; 1,4-dihydroxy-2-naphthoate biosynthesis; 1,4-dihydroxy-2-naphthoate from chorismate: step 5/7. It participates in quinol/quinone metabolism; menaquinone biosynthesis. Converts 2-succinylbenzoate (OSB) to 2-succinylbenzoyl-CoA (OSB-CoA). The chain is 2-succinylbenzoate--CoA ligase from Bacillus subtilis (strain 168).